A 321-amino-acid chain; its full sequence is Tetraacyldisaccharide 4'-kinase (321 aa).

54 to 61 (SVGGTGKT) is an ATP binding site.

The protein belongs to the LpxK family.

It catalyses the reaction a lipid A disaccharide + ATP = a lipid IVA + ADP + H(+). The protein operates within glycolipid biosynthesis; lipid IV(A) biosynthesis; lipid IV(A) from (3R)-3-hydroxytetradecanoyl-[acyl-carrier-protein] and UDP-N-acetyl-alpha-D-glucosamine: step 6/6. Functionally, transfers the gamma-phosphate of ATP to the 4'-position of a tetraacyldisaccharide 1-phosphate intermediate (termed DS-1-P) to form tetraacyldisaccharide 1,4'-bis-phosphate (lipid IVA). The chain is Tetraacyldisaccharide 4'-kinase from Rickettsia bellii (strain OSU 85-389).